Consider the following 463-residue polypeptide: Quinolone resistance protein NorB (463 aa).

14 helical membrane passes run 17–37, 53–73, 86–106, 107–127, 142–162, 165–185, 201–221, 230–250, 273–293, 299–319, 334–354, 357–377, 403–423, and 435–455; these read IGIVLSVITFWLFAQSLVNVV, IAVSITALFSGMFVVGAGGLA, IILNILGSLLIIISNIPLLLI, IGRLIQGLSAACIMPATLSII, YWSIGSWGGSGVCSFFGGAVA, LGWRWIFILSIIISLIALFLI, FDIKGLVLLVIMLLSLNILIT, SLLFITILAIAIVSFSLFIVL, TASNFLLNGVAGTLIVANTFV, YSSLQAGSLSITYLVMVLIMI, PMLIGTAVLIVGECLISLTFL, ILYVICCIIGYLFFGLGLGIY, MASALGGAFGVALSGAVYAIV, and IALWLNAGMGILSFVIILLLV.

It belongs to the major facilitator superfamily. TCR/Tet family.

Its subcellular location is the cell membrane. Its function is as follows. Multidrug efflux pump that acts independently of NorA and is one of the factors that confers resistance against diverse quinolones and chemical compounds. This is Quinolone resistance protein NorB (norB) from Staphylococcus aureus (strain MRSA252).